We begin with the raw amino-acid sequence, 413 residues long: MRQFLSSDRINSEIPQEKSEMVGFSDIDNSSRQIKEMEAAFRSAVKTGQIPGAVIMARDHSGRLNYTRCFGARTVVRDECNRLPPMQVDTPCRLASATKLLTTIMALQCVERGLVRLDETVDRLLPDLSAMKVLEGFDAAGEPKMRERKGKITLKHLLTHTSGLSYVFLHPLLREYMAKGHLQTAEKFGIQSRLAPPAVNDPGAEWIYGANLDWTGKLVERATGLDLEQYLQENICAPLNITDMTFKLQQRPDLLARRADQTHRNKADGRLRYDDSVYFRSDGDECFGGQGVFSGPESYMKVVHSLLQRDGRLLRPETVDLMFQPALDAQTEKQMNQHMDASPHINYGGPMPMVLRRSFGLGGMIALEDLDGQKWRRKGCLTFGGGPNIVWVMLLSALRFVFFFFFFFFFCSS.

Arg93 is a monacolin J binding site. Ser96 functions as the Acyl-ester intermediate in the catalytic mechanism. Monacolin J contacts are provided by Arg193, Tyr208, and Tyr278. Gly386 serves as a coordination point for 2-methylbutanoate.

The protein belongs to the class-A beta-lactamase family.

It catalyses the reaction monacolin J carboxylate + (S)-2-methylbutanoyl-[2-methylbutanoate polyketide synthase] = lovastatin carboxylate + holo-[2-methylbutanoate polyketide synthase]. Its pathway is polyketide biosynthesis; lovastatin biosynthesis. Its function is as follows. Acyltransferase; part of the gene cluster that mediates the biosynthesis of monakolin K, also known as lovastatin, and which acts as a potent competitive inhibitor of HMG-CoA reductase. Monakolin K biosynthesis is performed in two stages. The first stage is catalyzed by the nonaketide synthase mokA, which belongs to type I polyketide synthases and catalyzes the iterative nine-step formation of the polyketide. This PKS stage is completed by the action of dehydrogenase mokE, which catalyzes the NADPH-dependent reduction of the unsaturated tetra-, penta- and heptaketide intermediates that arise during the mokA-mediated biosynthesis of the nonaketide chain and leads to dihydromonacolin L. Covalently bound dihydromonacolin L is released from mokA by the mokD esterase. Conversion of dihydromonacolin L into monacolin L and then monacolin J is subsequently performed with the participation of molecular oxygen and P450 monoogygenase mokC. Finally, mokF performs the conversion of monacoline J to monacoline K through the addition of the side-chain diketide moiety (2R)-2-methylbutanoate produced by the diketide synthase mokB. The polypeptide is Acyltransferase mokF (Monascus pilosus (Red mold)).